A 453-amino-acid polypeptide reads, in one-letter code: Chromosomal replication initiator protein DnaA (453 aa).

The tract at residues 1–79 (MKSLIQEKWN…KTAIAEVINQ (79 aa)) is domain I, interacts with DnaA modulators. A domain II region spans residues 79–111 (QDFEIEFVLLSQTKAEEKVQTQAPNKIKNESLS). A domain III, AAA+ region region spans residues 112–330 (YLNPRYTFDT…GALTKIVALS (219 aa)). ATP is bound by residues G156, G158, K159, and T160. The interval 331-453 (RLKKKEVDVI…VLIKKINPTP (123 aa)) is domain IV, binds dsDNA.

Belongs to the DnaA family. As to quaternary structure, oligomerizes as a right-handed, spiral filament on DNA at oriC.

The protein localises to the cytoplasm. Its function is as follows. Plays an essential role in the initiation and regulation of chromosomal replication. ATP-DnaA binds to the origin of replication (oriC) to initiate formation of the DNA replication initiation complex once per cell cycle. Binds the DnaA box (a 9 base pair repeat at the origin) and separates the double-stranded (ds)DNA. Forms a right-handed helical filament on oriC DNA; dsDNA binds to the exterior of the filament while single-stranded (ss)DNA is stabiized in the filament's interior. The ATP-DnaA-oriC complex binds and stabilizes one strand of the AT-rich DNA unwinding element (DUE), permitting loading of DNA polymerase. After initiation quickly degrades to an ADP-DnaA complex that is not apt for DNA replication. Binds acidic phospholipids. In Lachnoclostridium phytofermentans (strain ATCC 700394 / DSM 18823 / ISDg) (Clostridium phytofermentans), this protein is Chromosomal replication initiator protein DnaA.